The primary structure comprises 335 residues: MGKQRVLSGVQPTGNLHLGNYLGAIRNWVEIQDQYDNFFCVVDLHAITVPHNPATLAADTYAIAALYLACGIDLKYSNIFVQSHVSAHSELAWFLNCITPLNWLQDMIQFKEKAVKQGENVGAGLLIYPVLMAADILLYQADKVPVGEDQKQHLELTRDIVNRFNHQFAKDKPVMKLPEPLIRKEGARVMSLTDGTRKMSKSDPSELSRINLLDPPDQIANKIKRCKTDPVKGLTFDDPERPECNNLLTLYMLLSGKKKEEVAAECQDMGWGQFKPLFTETAINALKPIQEKYQEITADKGYLESVLRDGREKAETVANQTLADVKAALGYSAPV.

Residues 11 to 13 and 19 to 20 each bind ATP; these read QPT and GN. A 'HIGH' region motif is present at residues 12 to 20; the sequence is PTGNLHLGN. D135 is a binding site for L-tryptophan. Residues 147 to 149, V189, and 198 to 202 each bind ATP; these read GED and KMSKS. The 'KMSKS' region signature appears at 198 to 202; the sequence is KMSKS.

The protein belongs to the class-I aminoacyl-tRNA synthetase family. In terms of assembly, homodimer.

The protein localises to the cytoplasm. It carries out the reaction tRNA(Trp) + L-tryptophan + ATP = L-tryptophyl-tRNA(Trp) + AMP + diphosphate + H(+). Functionally, catalyzes the attachment of tryptophan to tRNA(Trp). The protein is Tryptophan--tRNA ligase of Nostoc sp. (strain PCC 7120 / SAG 25.82 / UTEX 2576).